Here is a 419-residue protein sequence, read N- to C-terminus: Voltage-gated potassium channel subunit beta-1 (419 aa).

The interval 1-51 (MLAARTGAAGSQIAEESSKLRKQAAFSGGSKDRSPKKASENVKDSSLSPSG) is disordered. Positions 30-43 (SKDRSPKKASENVK) are enriched in basic and acidic residues. NADP(+) is bound by residues Thr-108, Trp-109, Gln-115, and Asp-137. The active-site Proton donor/acceptor is Tyr-142. NADP(+) is bound by residues Asn-210, Ser-240, Arg-241, Gln-266, Trp-295, Ser-296, Pro-297, Leu-298, Ala-299, Cys-300, Lys-306, Arg-316, Gly-375, Ser-377, Gln-381, Glu-384, and Asn-385.

It belongs to the shaker potassium channel beta subunit family. Homotetramer. Interaction with tetrameric potassium channel alpha subunits gives rise to a heterooctamer. Identified in potassium channel complexes containing KCNA1, KCNA2, KCNA4, KCNA5, KCNA6, KCNAB1 and KCNAB2. Part of a complex containing KCNA1, KCNA4 and LGI1; interaction with LGI1 inhibits down-regulation of KCNA1 channel activity. Interacts with the dimer formed by GNB1 and GNG2; this enhances KCNA1 binding. Interacts with SQSTM1. In terms of tissue distribution, detected in portal vein myocytes (at protein level).

The protein resides in the cytoplasm. The protein localises to the membrane. Its subcellular location is the cell membrane. The catalysed reaction is a primary alcohol + NADP(+) = an aldehyde + NADPH + H(+). It carries out the reaction a secondary alcohol + NADP(+) = a ketone + NADPH + H(+). Regulatory subunit of the voltage-gated potassium (Kv) channels composed of pore-forming and potassium-conducting alpha subunits and of regulatory beta subunits. The beta-1/KCNAB1 cytoplasmic subunit mediates closure of delayed rectifier potassium channels by physically obstructing the pore via its N-terminal domain and increases the speed of channel closure for other family members. Promotes the inactivation of KCNA1, KCNA2, KCNA4, KCNA5 and KCNA6 alpha subunit-containing channels. Displays nicotinamide adenine dinucleotide phosphate (NADPH)-dependent aldoketoreductase activity by catalyzing the NADPH-dependent reduction of a variety of endogenous aldehydes and ketones. The binding of NADPH is required for efficient down-regulation of potassium channel activity. Oxidation of the bound NADPH restrains N-terminal domain from blocking the channel, thereby decreasing N-type inactivation of potassium channel activity. The chain is Voltage-gated potassium channel subunit beta-1 (KCNAB1) from Oryctolagus cuniculus (Rabbit).